The primary structure comprises 450 residues: Phosphoglucosamine mutase (450 aa).

Catalysis depends on Ser103, which acts as the Phosphoserine intermediate. Residues Ser103, Asp243, Asp245, and Asp247 each coordinate Mg(2+). At Ser103 the chain carries Phosphoserine.

The protein belongs to the phosphohexose mutase family. The cofactor is Mg(2+). Activated by phosphorylation.

The enzyme catalyses alpha-D-glucosamine 1-phosphate = D-glucosamine 6-phosphate. Catalyzes the conversion of glucosamine-6-phosphate to glucosamine-1-phosphate. The chain is Phosphoglucosamine mutase from Lactobacillus delbrueckii subsp. bulgaricus (strain ATCC BAA-365 / Lb-18).